A 404-amino-acid chain; its full sequence is Methionine aminopeptidase 1D, mitochondrial (404 aa).

The transit peptide at M1–Y58 directs the protein to the mitochondrion. The segment at V86–K109 is disordered. Substrate is bound at residue H232. Positions 249, 260, and 323 each coordinate a divalent metal cation. A substrate-binding site is contributed by H330. Residues E355 and E389 each coordinate a divalent metal cation.

Belongs to the peptidase M24A family. Methionine aminopeptidase type 1 subfamily. Requires Co(2+) as cofactor. Zn(2+) serves as cofactor. The cofactor is Mn(2+). Fe(2+) is required as a cofactor.

The protein resides in the mitochondrion. The catalysed reaction is Release of N-terminal amino acids, preferentially methionine, from peptides and arylamides.. Its function is as follows. Removes the N-terminal methionine from nascent proteins. The N-terminal methionine is often cleaved when the second residue in the primary sequence is small and uncharged (Met-Ala-, Cys, Gly, Pro, Ser, Thr, or Val). The sequence is that of Methionine aminopeptidase 1D, mitochondrial (metap1d) from Dictyostelium discoideum (Social amoeba).